The chain runs to 321 residues: tRNA-dihydrouridine synthase B (321 aa).

FMN contacts are provided by residues 16–18 and glutamine 70; that span reads PMA. The active-site Proton donor is the cysteine 100. Residues lysine 139, 200-202, and 224-225 each bind FMN; these read NGD and GR.

The protein belongs to the Dus family. DusB subfamily. The cofactor is FMN.

It catalyses the reaction a 5,6-dihydrouridine in tRNA + NAD(+) = a uridine in tRNA + NADH + H(+). The catalysed reaction is a 5,6-dihydrouridine in tRNA + NADP(+) = a uridine in tRNA + NADPH + H(+). In terms of biological role, catalyzes the synthesis of 5,6-dihydrouridine (D), a modified base found in the D-loop of most tRNAs, via the reduction of the C5-C6 double bond in target uridines. In Salmonella typhi, this protein is tRNA-dihydrouridine synthase B.